A 630-amino-acid chain; its full sequence is Low affinity heme transporter str3 (630 aa).

Residues 1–26 (MEAKETHSISDHEVELQDAKPEEKSE) are compositionally biased toward basic and acidic residues. Positions 1–51 (MEAKETHSISDHEVELQDAKPEEKSENGNFVFEKAFSSDEEKGSGYNTNET) are disordered. Residues 1–79 (MEAKETHSIS…VRDSIYQNKR (79 aa)) lie on the Cytoplasmic side of the membrane. Phosphoserine occurs at positions 10 and 38. A helical transmembrane segment spans residues 80 to 100 (GMYLAYAFGIAILACSWASAI). Residues 101–120 (QSSTTYSYQVYATASFNRTS) lie on the Extracellular side of the membrane. A helical membrane pass occupies residues 121 to 141 (MISTLEIATAIISSVCKPILG). Topologically, residues 142–154 (KFSDITSRPMTYT) are cytoplasmic. Residues 155 to 175 (LVLLFYVIGFIVVASSSTISA) traverse the membrane as a helical segment. Position 176 (Y176) is a topological domain, extracellular. A helical transmembrane segment spans residues 177–197 (VIGSVFISIGSSGLDYLNTLV). Over 198 to 208 (VGDLTSLKWRG) the chain is Cytoplasmic. The chain crosses the membrane as a helical span at residues 209-229 (FMTALLSTPYIATVWFTGFIV). Residues 230 to 241 (QGIIDSNWRWGY) are Extracellular-facing. The helical transmembrane segment at 242 to 262 (GMFAIIMPAVMTPAVIILMYL) threads the bilayer. The Cytoplasmic portion of the chain corresponds to 263–302 (ERQANKDENIKKIINYQTEEKNKNKQSKWQKLWKAVLEVD). Residues 303–323 (LFGLILLGVGWSILLLPFSLT) form a helical membrane-spanning segment. Topologically, residues 324 to 335 (SYAKNGWKNPSM) are extracellular. Residues 336 to 356 (IAMMVVGGVILIAYSGYEMFI) form a helical membrane-spanning segment. The Cytoplasmic portion of the chain corresponds to 357–370 (APYPSCPRRVMNRT). The chain crosses the membrane as a helical span at residues 371-391 (FITAVIIDFFYYLAGYLQSMY). Topologically, residues 392–406 (FTTYTWILYDWSYRD) are extracellular. Residues 407–427 (WTYFNNTMTIALCVFGVFAGA) form a helical membrane-spanning segment. Residues 428–439 (MHRVFHRYKYLQ) are Cytoplasmic-facing. The helical transmembrane segment at 440–460 (IIGLVIKIVGYGILIRPNFAA) threads the bilayer. Over 461 to 465 (TGKVD) the chain is Extracellular. The helical transmembrane segment at 466-486 (LAWSLILIGMGGSFSVVGSQV) threads the bilayer. Over 487 to 502 (SCQASVPHQDLAIASS) the chain is Cytoplasmic. A helical membrane pass occupies residues 503 to 523 (LLPLYTNIGGAIGAAIASPIF). The tract at residues 522–576 (IFSNKVPKYLREYLPSSINDTQVYNFYSDSSLIREYPVGTEIRDGAIKAYSRSMF) is heme binding. Topologically, residues 524 to 574 (SNKVPKYLREYLPSSINDTQVYNFYSDSSLIREYPVGTEIRDGAIKAYSRS) are extracellular. Residues 575 to 595 (MFFLLVPAVSLSFIPLAAAFW) form a helical membrane-spanning segment. Over 596 to 630 (QSNFYLGNQQNAVEGDQDHKKKGDKETTQEEKIII) the chain is Cytoplasmic. A disordered region spans residues 610–630 (GDQDHKKKGDKETTQEEKIII). The segment covering 611–630 (DQDHKKKGDKETTQEEKIII) has biased composition (basic and acidic residues).

The protein belongs to the major facilitator superfamily.

It localises to the cell membrane. Functionally, low affinity heme transporter involved in the assimilation of exogenous heme during conditions of low cellular iron. The polypeptide is Low affinity heme transporter str3 (Schizosaccharomyces pombe (strain 972 / ATCC 24843) (Fission yeast)).